The following is a 263-amino-acid chain: Small ribosomal subunit protein eS4 (263 aa).

The region spanning 42–104 (LPLIVFLRNR…TGEHFRLVYD (63 aa)) is the S4 RNA-binding domain.

It belongs to the eukaryotic ribosomal protein eS4 family.

The sequence is that of Small ribosomal subunit protein eS4 (RPS4Y1) from Pongo pygmaeus (Bornean orangutan).